The chain runs to 320 residues: GTP 3',8-cyclase (320 aa).

The Radical SAM core domain maps to 5 to 225 (QFDRKINYLR…IQLIKKDEKA (221 aa)). Position 14 (R14) interacts with GTP. Positions 21 and 25 each coordinate [4Fe-4S] cluster. Y27 is an S-adenosyl-L-methionine binding site. Residue C28 participates in [4Fe-4S] cluster binding. R64 contributes to the GTP binding site. Residue G68 coordinates S-adenosyl-L-methionine. T95 is a binding site for GTP. An S-adenosyl-L-methionine-binding site is contributed by S119. Residue K155 coordinates GTP. M189 is a binding site for S-adenosyl-L-methionine. Positions 248 and 251 each coordinate [4Fe-4S] cluster. 253-255 (RIR) provides a ligand contact to GTP. Residue C265 coordinates [4Fe-4S] cluster.

It belongs to the radical SAM superfamily. MoaA family. Monomer and homodimer. [4Fe-4S] cluster is required as a cofactor.

It catalyses the reaction GTP + AH2 + S-adenosyl-L-methionine = (8S)-3',8-cyclo-7,8-dihydroguanosine 5'-triphosphate + 5'-deoxyadenosine + L-methionine + A + H(+). It functions in the pathway cofactor biosynthesis; molybdopterin biosynthesis. Catalyzes the cyclization of GTP to (8S)-3',8-cyclo-7,8-dihydroguanosine 5'-triphosphate. The chain is GTP 3',8-cyclase from Campylobacter jejuni subsp. doylei (strain ATCC BAA-1458 / RM4099 / 269.97).